The chain runs to 671 residues: Polyadenylate-binding protein 8 (671 aa).

4 consecutive RRM domains span residues 45–123, 133–210, 224–301, and 327–404; these read TSLY…YSVR, GNIF…PFVH, TNVY…KAQK, and SNLY…LAQR. The tract at residues 467 to 526 is disordered; it reads LVPGMRPGGSPMPNFFMPMMQQGQQQQQQQQQQQRPGGGRRGALPQPQQPSPMMQQQMHP. Composition is skewed to low complexity over residues 483–501 and 508–525; these read MPMM…QQQR and GALP…QQMH. The PABC domain occupies 573–650; sequence PIVALATRLA…AMDVLRSVAQ (78 aa).

The protein belongs to the polyadenylate-binding protein type-1 family. In terms of assembly, interacts with ERD15/CID1. Interacts with Turnip mosaic virus (TuMV) VPg-Pro and RNA-dependent RNA polymerase (RdRp). Expressed predominantly in immature flowers.

The protein resides in the cytoplasm. It localises to the nucleus. In terms of biological role, binds the poly(A) tail of mRNA. Appears to be an important mediator of the multiple roles of the poly(A) tail in mRNA biogenesis, stability and translation. During infection with potyvirus TuMV, acts as a potential integral component of the viral replicase complex that could play an important role in the regulation of potyviral RNA-dependent RNA polymerase (RdRp). This is Polyadenylate-binding protein 8 (PAB8) from Arabidopsis thaliana (Mouse-ear cress).